An 85-amino-acid polypeptide reads, in one-letter code: Progonadoliberin-2 (85 aa).

The first 23 residues, 1-23 (MCVSRLALLLGLLLCVGAQLSFA), serve as a signal peptide directing secretion. Gln24 carries the pyrrolidone carboxylic acid modification. At Gly33 the chain carries Glycine amide.

It belongs to the GnRH family. As to expression, expressed in only one cell group in the mesencephalon.

It is found in the secreted. Functionally, stimulates the secretion of gonadotropins. This Haplochromis burtoni (Burton's mouthbrooder) protein is Progonadoliberin-2 (gnrh2).